Consider the following 524-residue polypeptide: Caffeate CoA-transferase (524 aa).

Glu-323 acts as the 5-glutamyl coenzyme A thioester intermediate in catalysis.

The protein belongs to the 3-oxoacid CoA-transferase family. Homodimer.

It carries out the reaction hydrocaffeoyl-CoA + (E)-caffeate = 3-(3,4-dihydroxyphenyl)propanoate + (E)-caffeoyl-CoA. In terms of biological role, involved in caffeate respiration, which consists in the reduction of the C-C double bond of caffeate. CarA catalyzes an energy-saving CoA loop for caffeate activation in the steady state of caffeate respiration. It catalyzes the formation of caffeyl-CoA from caffeate with hydrocaffeyl-CoA as the CoA donor via a ping-pong mechanism. In addition to caffeate, the enzyme can utilize 4-coumarate or ferulate as CoA acceptor. Neither acetyl-CoA nor butyryl-CoA served as the CoA donor. In Acetobacterium woodii, this protein is Caffeate CoA-transferase.